Consider the following 938-residue polypeptide: Protocadherin gamma-C4 (938 aa).

A signal peptide spans 1–29; that stretch reads MLRKVRSWTEIWRWATLLFLFYHLGYVCG. Cadherin domains are found at residues 30-133, 134-242, 243-350, 351-455, 456-565, and 572-676; these read QIRY…APRF, PRQQ…APAF, QQSS…APYI, TVTS…PPSF, FQRS…APAV, and PGSL…VPDL. Over 30-692 the chain is Extracellular; that stretch reads QIRYPVPEES…REGESRLTLY (663 aa). N-linked (GlcNAc...) asparagine glycosylation is found at asparagine 265, asparagine 276, and asparagine 444. Residues 693–713 form a helical membrane-spanning segment; sequence LAVSLVAICFVSFGSFVALLS. Over 714–938 the chain is Cytoplasmic; that stretch reads KCLRGAACGV…KKKSGKKEKK (225 aa). Disordered regions lie at residues 791-847 and 908-938; these read PSAP…WPNN and ATLT…KEKK. Positions 822 to 847 are enriched in polar residues; it reads WRFSQAQRPGTSGSQNGDDTGTWPNN. Basic residues predominate over residues 928-938; the sequence is NKKKSGKKEKK.

It localises to the cell membrane. Functionally, potential calcium-dependent cell-adhesion protein. May be involved in the establishment and maintenance of specific neuronal connections in the brain. This Homo sapiens (Human) protein is Protocadherin gamma-C4 (PCDHGC4).